The chain runs to 122 residues: Large ribosomal subunit protein uL14 (122 aa).

The protein belongs to the universal ribosomal protein uL14 family. In terms of assembly, part of the 50S ribosomal subunit. Forms a cluster with proteins L3 and L19. In the 70S ribosome, L14 and L19 interact and together make contacts with the 16S rRNA in bridges B5 and B8.

Functionally, binds to 23S rRNA. Forms part of two intersubunit bridges in the 70S ribosome. This chain is Large ribosomal subunit protein uL14, found in Amoebophilus asiaticus (strain 5a2).